The following is a 383-amino-acid chain: Lipid-A-disaccharide synthase (383 aa).

The protein belongs to the LpxB family.

It catalyses the reaction a lipid X + a UDP-2-N,3-O-bis[(3R)-3-hydroxyacyl]-alpha-D-glucosamine = a lipid A disaccharide + UDP + H(+). It functions in the pathway bacterial outer membrane biogenesis; LPS lipid A biosynthesis. Its function is as follows. Condensation of UDP-2,3-diacylglucosamine and 2,3-diacylglucosamine-1-phosphate to form lipid A disaccharide, a precursor of lipid A, a phosphorylated glycolipid that anchors the lipopolysaccharide to the outer membrane of the cell. This is Lipid-A-disaccharide synthase from Aliivibrio fischeri (strain MJ11) (Vibrio fischeri).